A 346-amino-acid chain; its full sequence is Protein RecA (346 aa).

An ATP-binding site is contributed by glycine 67 to threonine 74.

The protein belongs to the RecA family.

The protein localises to the cytoplasm. Its function is as follows. Can catalyze the hydrolysis of ATP in the presence of single-stranded DNA, the ATP-dependent uptake of single-stranded DNA by duplex DNA, and the ATP-dependent hybridization of homologous single-stranded DNAs. It interacts with LexA causing its activation and leading to its autocatalytic cleavage. This is Protein RecA from Mycobacterium marinum (strain ATCC BAA-535 / M).